Consider the following 201-residue polypeptide: Pro-P-factor (201 aa).

The N-terminal stretch at 1-20 (MKITAVIALLFSLAAASPIP) is a signal peptide. 5 consecutive propeptides follow at residues 21 to 31 (VADPGVVSVSK), 58 to 65 (EFEAAPAK), 92 to 99 (EFEAAPEK), 126 to 133 (EFEAAPAK), and 160 to 201 (TEED…KFES). N187 and N194 each carry an N-linked (GlcNAc...) asparagine glycan.

Post-translationally, proteolytically cleaved by kpr, probably at the C-terminal side of dibasic Lys-Arg residues. In terms of processing, glycosylated. Most of the precursor molecules are glycosylated on at least one site, but only a small proportion are glycosylated on both sites.

It localises to the secreted. In h- cells under nutritional starvation, P-factor induces alteration of cell morphology toward mating, arrest of the cell cycle at the G1 phase prior to the initiation of DNA synthesis and indirect transcriptional activation of the sxa2 gene which down-regulates the signaling pathway. The chain is Pro-P-factor (map2) from Schizosaccharomyces pombe (strain 972 / ATCC 24843) (Fission yeast).